The chain runs to 324 residues: Glyoxylate/hydroxypyruvate reductase B (324 aa).

Residues Arg-237 and Glu-266 contribute to the active site. The active-site Proton donor is His-285.

Belongs to the D-isomer specific 2-hydroxyacid dehydrogenase family. GhrB subfamily. In terms of assembly, homodimer.

It localises to the cytoplasm. It catalyses the reaction glycolate + NADP(+) = glyoxylate + NADPH + H(+). The catalysed reaction is (R)-glycerate + NAD(+) = 3-hydroxypyruvate + NADH + H(+). It carries out the reaction (R)-glycerate + NADP(+) = 3-hydroxypyruvate + NADPH + H(+). Its function is as follows. Catalyzes the NADPH-dependent reduction of glyoxylate and hydroxypyruvate into glycolate and glycerate, respectively. This Escherichia coli O6:K15:H31 (strain 536 / UPEC) protein is Glyoxylate/hydroxypyruvate reductase B.